Consider the following 215-residue polypeptide: S-crystallin 2 (215 aa).

The GST N-terminal domain maps to 2–80 (PSYTLHYFNH…YLAREFGFHG (79 aa)). Positions 82-215 (NNLDMARVDF…YLKSRSSTDF (134 aa)) constitute a GST C-terminal domain.

It belongs to the GST superfamily. In terms of tissue distribution, lens.

In terms of biological role, S-crystallins are structural components of squids and octopi eye lens. Contains relatively little GST activity (1/1000 of that of mammalian GST enzyme). The sequence is that of S-crystallin 2 (OCTS2) from Octopus vulgaris (Common octopus).